Reading from the N-terminus, the 571-residue chain is Cytosolic Fe-S cluster assembly factor NAR1 (571 aa).

The [4Fe-4S] cluster site is built by Cys-20, Cys-62, Cys-65, Cys-68, Cys-204, and Cys-259. The segment at 415-437 (AKPSRMPGGKPIGSARRPNGKAS) is disordered. Positions 449 and 453 each coordinate [4Fe-4S] cluster.

This sequence belongs to the NARF family.

Functionally, component of the cytosolic Fe/S protein assembly machinery. Required for maturation of extramitochondrial Fe/S proteins. May play a role in the transfer of pre-assembled Fe/S clusters to target apoproteins. This Sclerotinia sclerotiorum (strain ATCC 18683 / 1980 / Ss-1) (White mold) protein is Cytosolic Fe-S cluster assembly factor NAR1 (NAR1).